A 197-amino-acid polypeptide reads, in one-letter code: Small ribosomal subunit protein eS1 (197 aa).

This sequence belongs to the eukaryotic ribosomal protein eS1 family.

In Sulfolobus acidocaldarius (strain ATCC 33909 / DSM 639 / JCM 8929 / NBRC 15157 / NCIMB 11770), this protein is Small ribosomal subunit protein eS1.